The chain runs to 225 residues: ATP-dependent dethiobiotin synthetase BioD (225 aa).

15–20 (EIGKTF) contacts ATP. Threonine 19 is a binding site for Mg(2+). Lysine 40 is an active-site residue. Residues aspartate 57, 118 to 121 (EGVG), 178 to 179 (NR), and 207 to 209 (PHV) each bind ATP. Mg(2+) contacts are provided by aspartate 57 and glutamate 118.

Belongs to the dethiobiotin synthetase family. In terms of assembly, homodimer. The cofactor is Mg(2+).

The protein localises to the cytoplasm. It carries out the reaction (7R,8S)-7,8-diammoniononanoate + CO2 + ATP = (4R,5S)-dethiobiotin + ADP + phosphate + 3 H(+). It functions in the pathway cofactor biosynthesis; biotin biosynthesis; biotin from 7,8-diaminononanoate: step 1/2. Functionally, catalyzes a mechanistically unusual reaction, the ATP-dependent insertion of CO2 between the N7 and N8 nitrogen atoms of 7,8-diaminopelargonic acid (DAPA, also called 7,8-diammoniononanoate) to form a ureido ring. This chain is ATP-dependent dethiobiotin synthetase BioD, found in Aromatoleum aromaticum (strain DSM 19018 / LMG 30748 / EbN1) (Azoarcus sp. (strain EbN1)).